Reading from the N-terminus, the 429-residue chain is Glutamate-1-semialdehyde 2,1-aminomutase 2 (429 aa).

Lys268 carries the post-translational modification N6-(pyridoxal phosphate)lysine.

The protein belongs to the class-III pyridoxal-phosphate-dependent aminotransferase family. HemL subfamily. Homodimer. Requires pyridoxal 5'-phosphate as cofactor.

The protein resides in the cytoplasm. The enzyme catalyses (S)-4-amino-5-oxopentanoate = 5-aminolevulinate. It functions in the pathway porphyrin-containing compound metabolism; protoporphyrin-IX biosynthesis; 5-aminolevulinate from L-glutamyl-tRNA(Glu): step 2/2. The polypeptide is Glutamate-1-semialdehyde 2,1-aminomutase 2 (Staphylococcus epidermidis (strain ATCC 35984 / DSM 28319 / BCRC 17069 / CCUG 31568 / BM 3577 / RP62A)).